The primary structure comprises 195 residues: Imidazoleglycerol-phosphate dehydratase (195 aa).

The protein belongs to the imidazoleglycerol-phosphate dehydratase family.

Its subcellular location is the cytoplasm. The enzyme catalyses D-erythro-1-(imidazol-4-yl)glycerol 3-phosphate = 3-(imidazol-4-yl)-2-oxopropyl phosphate + H2O. The protein operates within amino-acid biosynthesis; L-histidine biosynthesis; L-histidine from 5-phospho-alpha-D-ribose 1-diphosphate: step 6/9. The protein is Imidazoleglycerol-phosphate dehydratase of Geobacillus kaustophilus (strain HTA426).